The sequence spans 269 residues: MKIALGIEYNGTHYFGWQRQANVTSVQEKLESAVSFVANEFCQIYCAGRTDSGVHATGQVVHFDTKAIRSEKAWTFGLNANLPADIAVRWAKVVSEDFHARFSATARRYRYLIYNHPLRSALFPTGVTHHHVALDHRLMHQAGQYLLGEHDFSSFRAAQCQSNTPWRNIHHLHVFRQANYIIVDIQANAFVHHMVRNIVGSLLEIGSGKQPVEWMDWLLTQKDRTLAAPTAKPDGLYLVEVKYPNHFNLPKNPLGPLFLGEPKIDFNHD.

D51 serves as the catalytic Nucleophile. Y109 provides a ligand contact to substrate.

It belongs to the tRNA pseudouridine synthase TruA family. In terms of assembly, homodimer.

The enzyme catalyses uridine(38/39/40) in tRNA = pseudouridine(38/39/40) in tRNA. Its function is as follows. Formation of pseudouridine at positions 38, 39 and 40 in the anticodon stem and loop of transfer RNAs. The sequence is that of tRNA pseudouridine synthase A from Histophilus somni (strain 129Pt) (Haemophilus somnus).